Here is a 335-residue protein sequence, read N- to C-terminus: Dolichyl-diphosphooligosaccharide--protein glycosyltransferase subunit MAGT1 (335 aa).

An N-terminal signal peptide occupies residues 1 to 29 (MASPRWLWCVCATAAVTLLLVSKVPSASA). The Extracellular portion of the chain corresponds to 30-184 (QRKKEKVLVE…DVNIRVIRPP (155 aa)). The Thioredoxin domain occupies 47–175 (WTNQRPVIRM…IARWIADRTD (129 aa)). Residue Asn-71 is glycosylated (N-linked (GlcNAc...) asparagine). Cys-87 and Cys-90 are oxidised to a cystine. Residues 185–205 (NYAGPLMLGLLLAVIGGLVYL) traverse the membrane as a helical segment. The Cytoplasmic segment spans residues 206 to 209 (RRSN). Residues 210-230 (MEFLFNKTGWAFAALCFVLAM) form a helical membrane-spanning segment. Residues 231–270 (TSGQMWNHIRGPPYAHKNPHTGHVNYIHGSSQAQFVAETH) lie on the Extracellular side of the membrane. Residues 271-291 (IVLLFNGGVTLGMVLLCEAAA) form a helical membrane-spanning segment. The Cytoplasmic portion of the chain corresponds to 292 to 300 (SDMDIGKRR). The helical transmembrane segment at 301 to 321 (MMCIAGIGLVVLFFSWMLSIF) threads the bilayer. The Extracellular segment spans residues 322–335 (RSKYHGYPYSFLMS).

It belongs to the OST3/OST6 family. As to quaternary structure, accessory component of the STT3B-containing form of the oligosaccharyltransferase (OST) complex. OST exists in two different complex forms which contain common core subunits RPN1, RPN2, OST48, OST4, DAD1 and TMEM258, either STT3A or STT3B as catalytic subunits, and form-specific accessory subunits. OST can form stable complexes with the Sec61 complex or with both the Sec61 and TRAP complexes. The association of TUSC3 or MAGT1 with the STT3B-containing complex seems to be mutually exclusvice.

It localises to the cell membrane. The protein resides in the endoplasmic reticulum. Its subcellular location is the endoplasmic reticulum membrane. Its pathway is protein modification; protein glycosylation. Functionally, accessory component of the STT3B-containing form of the N-oligosaccharyl transferase (OST) complex which catalyzes the transfer of a high mannose oligosaccharide from a lipid-linked oligosaccharide donor to an asparagine residue within an Asn-X-Ser/Thr consensus motif in nascent polypeptide chains. Involved in N-glycosylation of STT3B-dependent substrates. Specifically required for the glycosylation of a subset of acceptor sites that are near cysteine residues; in this function seems to act redundantly with TUSC3. In its oxidized form proposed to form transient mixed disulfides with a glycoprotein substrate to facilitate access of STT3B to the unmodified acceptor site. Also has oxidoreductase-independent functions in the STT3B-containing OST complex possibly involving substrate recognition. Could indirectly play a role in Mg(2+) transport in epithelial cells. This is Dolichyl-diphosphooligosaccharide--protein glycosyltransferase subunit MAGT1 from Rattus norvegicus (Rat).